The primary structure comprises 328 residues: UPF0285 protein Mevan_1551 (328 aa).

It belongs to the UPF0285 family.

The sequence is that of UPF0285 protein Mevan_1551 from Methanococcus vannielii (strain ATCC 35089 / DSM 1224 / JCM 13029 / OCM 148 / SB).